Reading from the N-terminus, the 424-residue chain is Tyrosine--tRNA ligase (424 aa).

Tyr37 serves as a coordination point for L-tyrosine. The 'HIGH' region motif lies at 42-51 (PTADSLHLGH). Residues Tyr175 and Gln179 each coordinate L-tyrosine. The 'KMSKS' region signature appears at 235-239 (KFGKT). Lys238 contacts ATP. In terms of domain architecture, S4 RNA-binding spans 357-414 (ADLMQALVDAELQPSRGQARKTIASNAVTINGEKQSDPEYIFNDEDRLFGRYTLLRRG).

This sequence belongs to the class-I aminoacyl-tRNA synthetase family. TyrS type 1 subfamily. Homodimer.

Its subcellular location is the cytoplasm. It carries out the reaction tRNA(Tyr) + L-tyrosine + ATP = L-tyrosyl-tRNA(Tyr) + AMP + diphosphate + H(+). Functionally, catalyzes the attachment of tyrosine to tRNA(Tyr) in a two-step reaction: tyrosine is first activated by ATP to form Tyr-AMP and then transferred to the acceptor end of tRNA(Tyr). The chain is Tyrosine--tRNA ligase from Salmonella enteritidis PT4 (strain P125109).